The following is a 215-amino-acid chain: Ras-related protein RAB1BV (215 aa).

GTP is bound by residues 22-29 (GDSGVGKS), 70-74 (DTAGQ), and 128-131 (NKAD). The segment at 183 to 215 (DSDTRQEAQPSITIKPADQSGNQAAAKSACCGS) is disordered. 2 S-geranylgeranyl cysteine lipidation sites follow: Cys-212 and Cys-213.

Belongs to the small GTPase superfamily. Rab family.

It localises to the cell membrane. The sequence is that of Ras-related protein RAB1BV (RAB1BV) from Beta vulgaris (Sugar beet).